The chain runs to 352 residues: Tubby-like F-box protein 10 (352 aa).

Positions 1–11 are enriched in basic and acidic residues; the sequence is MAAVREPREEA. The disordered stretch occupies residues 1-23; sequence MAAVREPREEAAVGEGEGEEEGR. An F-box domain is found at 22–78; that stretch reads GRWGGLLPELVEEVVRRVEASGGERWPARKDLVSCACVCRRWREAAAAVVRPLPESG.

It belongs to the TUB family. As to expression, ubiquitous.

This chain is Tubby-like F-box protein 10 (TULP10), found in Oryza sativa subsp. japonica (Rice).